The sequence spans 233 residues: MSARAAWLVQAGCLDYAQVWAWQRQLQDNRRNNPDRPDVLLLLEHPAVYTLGRGSSLAHLKFDPQHPPAPVYRIERGGEVTHHAPGQLVGYPILNLRHHRCDLHWYLRQLEAVLILVLANYGLTGERIEGLTGVWVEGKKLAAIGIQVSRWISLHGFALNVCPDLAGFEAIVPCGISDRAVGSLVEFCPDVRLEVVRSQVAGAFAQTFELDLQPCSLEQLQAEENLTAIAGDP.

A BPL/LPL catalytic domain is found at 34-212 (PDRPDVLLLL…AFAQTFELDL (179 aa)). Substrate is bound by residues 76-83 (RGGEVTHH), 143-145 (AIG), and 156-158 (GFA). Cysteine 174 serves as the catalytic Acyl-thioester intermediate.

This sequence belongs to the LipB family.

The protein localises to the cytoplasm. It carries out the reaction octanoyl-[ACP] + L-lysyl-[protein] = N(6)-octanoyl-L-lysyl-[protein] + holo-[ACP] + H(+). Its pathway is protein modification; protein lipoylation via endogenous pathway; protein N(6)-(lipoyl)lysine from octanoyl-[acyl-carrier-protein]: step 1/2. Catalyzes the transfer of endogenously produced octanoic acid from octanoyl-acyl-carrier-protein onto the lipoyl domains of lipoate-dependent enzymes. Lipoyl-ACP can also act as a substrate although octanoyl-ACP is likely to be the physiological substrate. This is Octanoyltransferase from Synechococcus elongatus (strain ATCC 33912 / PCC 7942 / FACHB-805) (Anacystis nidulans R2).